A 329-amino-acid chain; its full sequence is Putative glucose ABC transporter permease protein TsgC13 (329 aa).

7 helical membrane-spanning segments follow: residues 3–23 (FAAG…LAGL), 32–52 (GVLN…GFVV), 60–80 (WLGF…HAFL), 89–109 (VISG…FGSG), 139–161 (AFFR…WFFL), 193–213 (LAVI…SLAF), and 216–236 (LWVP…VVFA).

Belongs to the binding-protein-dependent transport system permease family. The complex is composed of two ATP-binding proteins (TsgD13), two transmembrane proteins (TsgB13 and TsgC13) and a solute-binding protein (TsgA13).

Its subcellular location is the cell membrane. Part of an ABC transporter complex involved in glucose import (Potential). Responsible for the translocation of the substrate across the membrane. In Haloferax volcanii (strain ATCC 29605 / DSM 3757 / JCM 8879 / NBRC 14742 / NCIMB 2012 / VKM B-1768 / DS2) (Halobacterium volcanii), this protein is Putative glucose ABC transporter permease protein TsgC13 (tsgC13).